Here is a 250-residue protein sequence, read N- to C-terminus: uncharacterized protein (250 aa).

An N-terminal signal peptide occupies residues Met-1–Ala-24. Residue Cys-25 is the site of N-palmitoyl cysteine attachment. Cys-25 carries S-diacylglycerol cysteine lipidation. A TNase-like domain is found at Arg-44–Tyr-200.

It localises to the cell membrane. This is an uncharacterized protein from Mycoplasma genitalium (strain ATCC 33530 / DSM 19775 / NCTC 10195 / G37) (Mycoplasmoides genitalium).